A 449-amino-acid polypeptide reads, in one-letter code: PC-esterase domain-containing protein 1A (449 aa).

The protein belongs to the PC-esterase family.

The protein is PC-esterase domain-containing protein 1A (Pced1a) of Mus musculus (Mouse).